Here is a 233-residue protein sequence, read N- to C-terminus: Large ribosomal subunit protein uL1 (233 aa).

Belongs to the universal ribosomal protein uL1 family. Part of the 50S ribosomal subunit.

Binds directly to 23S rRNA. The L1 stalk is quite mobile in the ribosome, and is involved in E site tRNA release. In terms of biological role, protein L1 is also a translational repressor protein, it controls the translation of the L11 operon by binding to its mRNA. The chain is Large ribosomal subunit protein uL1 from Shewanella amazonensis (strain ATCC BAA-1098 / SB2B).